The sequence spans 319 residues: Shiga-like toxin 2 subunit A (319 aa).

A signal peptide spans 1–22; it reads MKCILFKWVLCLLLGFSSVSYS. Residues 23–272 form an A1 region; that stretch reads REFTIDFSTQ…CHHQGARSVR (250 aa). Residue glutamate 189 is part of the active site. Residues cysteine 263 and cysteine 282 are joined by a disulfide bond. An A2 region spans residues 273–314; that stretch reads AVNEESQPECQITGDRPVIKINNTLWESNTAAAFLNRKSQFL.

Belongs to the ribosome-inactivating protein family. In terms of assembly, shiga-like toxin contains a single A subunit and multiple copies of a B subunit.

It is found in the secreted. The enzyme catalyses Endohydrolysis of the N-glycosidic bond at one specific adenosine on the 28S rRNA.. Its function is as follows. The A subunit is responsible for inhibiting protein synthesis through the catalytic inactivation of 60S ribosomal subunits. After endocytosis, the A subunit is cleaved by furin in two fragments, A1 and A2: A1 is the catalytically active fragment, and A2 is essential for holotoxin assembly with the B subunits. This is Shiga-like toxin 2 subunit A (stxA2) from Escherichia coli O157:H7 (Bacteriophage 933W).